Consider the following 320-residue polypeptide: UPF0053 protein in cps region (320 aa).

Residues 4-24 (CLSFLLMIGFSLIAEGFSFII) form a helical membrane-spanning segment. 2 consecutive CBS domains span residues 121-183 (MTSR…PLDL) and 186-244 (LVRQ…PNEV).

This sequence belongs to the UPF0053 family.

The protein localises to the cell membrane. This Klebsiella pneumoniae protein is UPF0053 protein in cps region.